Consider the following 634-residue polypeptide: Chaperone protein HtpG (634 aa).

The a; substrate-binding stretch occupies residues 1–342; it reads MSVETQKETL…SNDLSLNVSR (342 aa). The tract at residues 343–559 is b; sequence EILQKDPIID…EQDLGLQMRQ (217 aa). Residues 560 to 634 form a c region; that stretch reads ILEASGQKVP…LNKLLVELSV (75 aa).

Belongs to the heat shock protein 90 family. Homodimer.

It localises to the cytoplasm. Its function is as follows. Molecular chaperone. Has ATPase activity. The sequence is that of Chaperone protein HtpG from Pseudomonas fluorescens (strain ATCC BAA-477 / NRRL B-23932 / Pf-5).